The sequence spans 513 residues: GMP synthase [glutamine-hydrolyzing] (513 aa).

The 198-residue stretch at 3–200 (SVLVLDFGSQ…LLNIAGITPD (198 aa)) folds into the Glutamine amidotransferase type-1 domain. Cys-80 functions as the Nucleophile in the catalytic mechanism. Residues His-174 and Glu-176 contribute to the active site. One can recognise a GMPS ATP-PPase domain in the interval 201 to 388 (WSSKSFIDHQ…LGIAEDILMR (188 aa)). Residue 228 to 234 (SGGVDST) coordinates ATP.

Homodimer.

The enzyme catalyses XMP + L-glutamine + ATP + H2O = GMP + L-glutamate + AMP + diphosphate + 2 H(+). It participates in purine metabolism; GMP biosynthesis; GMP from XMP (L-Gln route): step 1/1. Functionally, catalyzes the synthesis of GMP from XMP. This chain is GMP synthase [glutamine-hydrolyzing], found in Chlorobium phaeovibrioides (strain DSM 265 / 1930) (Prosthecochloris vibrioformis (strain DSM 265)).